Consider the following 417-residue polypeptide: Indole-3-pyruvate monooxygenase YUCCA6 (417 aa).

36–41 (GAGPSG) contacts FAD. 204 to 209 (GCGNSG) lines the NADP(+) pocket.

This sequence belongs to the FMO family. The cofactor is FAD. Highly expressed in roots but modestly expressed in the cauline leaves and flowers. Expressed in anthers.

It is found in the cytoplasm. The catalysed reaction is indole-3-pyruvate + NADPH + O2 + H(+) = (indol-3-yl)acetate + CO2 + NADP(+) + H2O. Its pathway is plant hormone metabolism; auxin biosynthesis. Its function is as follows. Involved in auxin biosynthesis via the indole-3-pyruvic acid (IPA) pathway. Also able to convert in vitro phenyl pyruvate (PPA) to phenyl acetic acid (PAA). Required for the formation of floral organs and vascular tissues. Belongs to the set of redundant YUCCA genes probably responsible for auxin biosynthesis in shoots. This Arabidopsis thaliana (Mouse-ear cress) protein is Indole-3-pyruvate monooxygenase YUCCA6 (YUC6).